The primary structure comprises 252 residues: MTDLIRQGALFLMSEKCYDNYFLYHNFLDVPCFKALLSKGLGLAIIAGSVLVKVPQVLKILNSKSGEGINIVGVVLDLLAISFHLSYNFMHGYPFSAWGDSTFLAIQTVTIAVLVLFFNGRKAQSGLFLVGYVVLMYVLNSGLTPMSVLFTIQSCNIPILLVGKLSQAYTNYQAGSTGQLSAATVIMMFAGSVARIFTSIQETGDFMIILTFIASTFANSVILGQLIYYWNKPAGVKVKDSKAKKPKTKKDD.

Positions 34–100 (KALLSKGLGL…HGYPFSAWGD (67 aa)) constitute a PQ-loop 1 domain. Helical transmembrane passes span 41–61 (LGLA…LKIL), 69–89 (INIV…SYNF), 98–118 (WGDS…VLFF), 126–146 (GLFL…LTPM), 148–168 (VLFT…LSQA), 180–200 (LSAA…FTSI), and 207–227 (MIIL…GQLI). Residues 157 to 211 (IPILLVGKLSQAYTNYQAGSTGQLSAATVIMMFAGSVARIFTSIQETGDFMIILT) enclose the PQ-loop 2 domain.

It belongs to the MPDU1 (TC 2.A.43.3) family.

It is found in the membrane. In Drosophila melanogaster (Fruit fly), this protein is Mannose-P-dolichol utilization defect 1 protein homolog.